Here is a 348-residue protein sequence, read N- to C-terminus: Secreted frizzled-related protein 4 (348 aa).

An N-terminal signal peptide occupies residues 1–18 (MLLSILVALCLCVRLALG). Residues 19–139 (VRGAPCEAVR…VYDRGVCISP (121 aa)) enclose the FZ domain. Intrachain disulfides connect C24/C85, C32/C78, C69/C108, C97/C136, and C101/C125. N-linked (GlcNAc...) asparagine glycosylation is found at N38 and N68. N-linked (GlcNAc...) asparagine glycans are attached at residues N116, N194, and N240. The NTR domain maps to 178 to 296 (CKCKKVKPTL…WEERLQEQQR (119 aa)). The segment covering 289–303 (ERLQEQQRTTQDKKQ) has biased composition (basic and acidic residues). The interval 289–348 (ERLQEQQRTTQDKKQIASRTSRSNPPKPKGRSPASKPASPKKNIKARSAPKKSNPKKSTS) is disordered. The span at 330–348 (KNIKARSAPKKSNPKKSTS) shows a compositional bias: basic residues.

It belongs to the secreted frizzled-related protein (sFRP) family. In terms of tissue distribution, expressed in the involuting mammary gland, ovarian corpus luteum and prostate. In ovaries, low levels found in granulosa cells. High levels in corpora lutea of pregnant animals.

The protein resides in the secreted. In terms of biological role, soluble frizzled-related proteins (sFRPS) function as modulators of Wnt signaling through direct interaction with Wnts. They have a role in regulating cell growth and differentiation in specific cell types. SFRP4 plays a role in bone morphogenesis. May also act as a regulator of adult uterine morphology and function. May also increase apoptosis during ovulation possibly through modulation of FZ1/FZ4/WNT4 signaling. Has phosphaturic effects by specifically inhibiting sodium-dependent phosphate uptake. This is Secreted frizzled-related protein 4 (Sfrp4) from Rattus norvegicus (Rat).